The primary structure comprises 398 residues: GTP cyclohydrolase-2 (398 aa).

Positions 1-172 (MNTPTHTHPH…TAAAGASTTE (172 aa)) are unknown. Positions 173 to 398 (YELVTRTPVP…VKSIPKTGHA (226 aa)) are GTP cyclohydrolase II. 220-224 (RVHSS) lines the GTP pocket. Zn(2+) contacts are provided by Cys-225, Cys-236, and Cys-238. GTP is bound by residues Gln-241, 263-265 (EGR), and Thr-285. Asp-297 (proton acceptor) is an active-site residue. Arg-299 serves as the catalytic Nucleophile. Residues Ser-320 and Lys-325 each contribute to the GTP site. The interval 375-398 (QRPQDPSETVDGETVKSIPKTGHA) is disordered.

It in the C-terminal section; belongs to the GTP cyclohydrolase II family. It depends on Zn(2+) as a cofactor.

The catalysed reaction is GTP + 4 H2O = 2,5-diamino-6-hydroxy-4-(5-phosphoribosylamino)-pyrimidine + formate + 2 phosphate + 3 H(+). It functions in the pathway cofactor biosynthesis; riboflavin biosynthesis; 5-amino-6-(D-ribitylamino)uracil from GTP: step 1/4. In terms of biological role, catalyzes the conversion of GTP to 2,5-diamino-6-ribosylamino-4(3H)-pyrimidinone 5'-phosphate (DARP), formate and pyrophosphate. The polypeptide is GTP cyclohydrolase-2 (ribA) (Xylella fastidiosa (strain 9a5c)).